Consider the following 883-residue polypeptide: Alanine--tRNA ligase (883 aa).

Positions 560, 564, 665, and 669 each coordinate Zn(2+).

This sequence belongs to the class-II aminoacyl-tRNA synthetase family. Zn(2+) is required as a cofactor.

It is found in the cytoplasm. It carries out the reaction tRNA(Ala) + L-alanine + ATP = L-alanyl-tRNA(Ala) + AMP + diphosphate. Catalyzes the attachment of alanine to tRNA(Ala) in a two-step reaction: alanine is first activated by ATP to form Ala-AMP and then transferred to the acceptor end of tRNA(Ala). Also edits incorrectly charged Ser-tRNA(Ala) and Gly-tRNA(Ala) via its editing domain. This Mesomycoplasma hyopneumoniae (strain 7448) (Mycoplasma hyopneumoniae) protein is Alanine--tRNA ligase.